Here is a 284-residue protein sequence, read N- to C-terminus: 2-dehydro-3-deoxyphosphooctonate aldolase (284 aa).

The protein belongs to the KdsA family.

The protein resides in the cytoplasm. It carries out the reaction D-arabinose 5-phosphate + phosphoenolpyruvate + H2O = 3-deoxy-alpha-D-manno-2-octulosonate-8-phosphate + phosphate. It functions in the pathway carbohydrate biosynthesis; 3-deoxy-D-manno-octulosonate biosynthesis; 3-deoxy-D-manno-octulosonate from D-ribulose 5-phosphate: step 2/3. The protein operates within bacterial outer membrane biogenesis; lipopolysaccharide biosynthesis. The sequence is that of 2-dehydro-3-deoxyphosphooctonate aldolase from Haemophilus influenzae (strain 86-028NP).